We begin with the raw amino-acid sequence, 252 residues long: Mitochondrial peculiar membrane protein 1 (252 aa).

The segment at 230–252 (TTTTSKGSSPQVKHKVVSVDEDN) is disordered.

It localises to the mitochondrion membrane. This is Mitochondrial peculiar membrane protein 1 (MPM1) from Saccharomyces cerevisiae (strain ATCC 204508 / S288c) (Baker's yeast).